Reading from the N-terminus, the 381-residue chain is Prostatic acid phosphatase (381 aa).

Positions 1-31 (MRAVPLPLSRTASLSLGFLLLLSLCLDPGQA) are cleaved as a signal peptide. Position 42 (arginine 42) interacts with substrate. Residue histidine 43 is the Nucleophile of the active site. Residue arginine 46 participates in substrate binding. Residue asparagine 93 is glycosylated (N-linked (GlcNAc...) asparagine). Arginine 110 contributes to the substrate binding site. 3 disulfides stabilise this stretch: cysteine 160/cysteine 371, cysteine 214/cysteine 312, and cysteine 346/cysteine 350. Asparagine 219 carries N-linked (GlcNAc...) asparagine glycosylation. Residue histidine 288 participates in substrate binding. The Proton donor role is filled by aspartate 289. Asparagine 332 is a glycosylation site (N-linked (GlcNAc...) asparagine).

Belongs to the histidine acid phosphatase family. In terms of assembly, homodimer; dimer formation is required for phosphatase activity. In terms of tissue distribution, expressed in salivary gland, thymus and thyroid gland. As to expression, widely expressed in prostate lobes, brain, kidney, liver, lung, muscle, placenta, salivary gland, spleen, thyroid and thymus. Locates to Schwann cells and fibroblasts. Expressed in peptidergic and non-peptidergic nociceptive (pain-sensing) neurons. Preferentially expressed in non-peptidergic doral root ganglia neurons.

It localises to the secreted. It is found in the cell membrane. The protein resides in the lysosome membrane. The catalysed reaction is a phosphate monoester + H2O = an alcohol + phosphate. It carries out the reaction a ribonucleoside 5'-phosphate + H2O = a ribonucleoside + phosphate. It catalyses the reaction 1-(9Z-octadecenoyl)-sn-glycero-3-phosphate + H2O = 1-(9Z-octadecenoyl)-sn-glycerol + phosphate. The enzyme catalyses O-phospho-L-tyrosyl-[protein] + H2O = L-tyrosyl-[protein] + phosphate. A non-specific tyrosine phosphatase that dephosphorylates a diverse number of substrates under acidic conditions (pH 4-6) including alkyl, aryl, and acyl orthophosphate monoesters and phosphorylated proteins. Has lipid phosphatase activity and inactivates lysophosphatidic acid in seminal plasma. Its function is as follows. In addition to its tyrosine phosphatase activity, also has ecto-5'-nucleotidase activity in dorsal root ganglion (DRG) neurons. Generates adenosine from AMP. This extracellular adenosine leads to a decrease in chronic pain by activating A1R in nociceptive neurons. This is Prostatic acid phosphatase (Acp3) from Mus musculus (Mouse).